Here is a 196-residue protein sequence, read N- to C-terminus: Putative acetyltransferase YJL218W (196 aa).

N84 contacts acetyl-CoA. The Proton donor/acceptor role is filled by H114. Residues G141, A159, 164–165, K179, and R182 each bind acetyl-CoA; that span reads IR.

This sequence belongs to the transferase hexapeptide repeat family. Homodimer.

The polypeptide is Putative acetyltransferase YJL218W (Saccharomyces cerevisiae (strain ATCC 204508 / S288c) (Baker's yeast)).